The primary structure comprises 540 residues: IQ motif and ankyrin repeat domain-containing protein 1 (540 aa).

Residues Met-1–Ala-17 are compositionally biased toward low complexity. Positions Met-1–Glu-62 are disordered. An IQ domain is found at Glu-62–Glu-91. ANK repeat units lie at residues His-191–Thr-220 and Phe-224–Met-253. Positions Leu-281 to Glu-388 form a coiled coil.

In Mus musculus (Mouse), this protein is IQ motif and ankyrin repeat domain-containing protein 1.